The primary structure comprises 204 residues: Signal peptidase I (204 aa).

The Cytoplasmic portion of the chain corresponds to 1–10 (MNLFKNFLKE). Residues 11-30 (WGLFLLILSLLALSRIFFWS) form a helical membrane-spanning segment. Over 31–204 (NVRVEGHSMD…FWPITRIGTF (174 aa)) the chain is Extracellular. Active-site residues include serine 38 and lysine 76.

It belongs to the peptidase S26 family.

It is found in the cell membrane. It carries out the reaction Cleavage of hydrophobic, N-terminal signal or leader sequences from secreted and periplasmic proteins.. In Streptococcus pneumoniae (strain ATCC BAA-255 / R6), this protein is Signal peptidase I (lepB).